The primary structure comprises 952 residues: Ubiquitin carboxyl-terminal hydrolase 15 (952 aa).

An N-acetylalanine modification is found at A2. A mediates interaction with SART3 region spans residues 2–223 (AEGGAADLDT…KNEDGTWPRG (222 aa)). A DUSP domain is found at 7 to 118 (ADLDTQRSDI…GQEPIARKVV (112 aa)). The 645-residue stretch at 260 to 904 (CGLSNLGNTC…AAYVLFYQRQ (645 aa)) folds into the USP domain. The active-site Nucleophile is C269. Phosphothreonine is present on T573. Residues 597–665 (ETDGPLRCCE…GGDNDSENGL (69 aa)) are disordered. Positions 627–644 (METDEPDDESSQDQELPS) are enriched in acidic residues. H862 (proton acceptor) is an active-site residue. The disordered stretch occupies residues 923 to 952 (SAATGVPLESDEDSNDNDNDLENENCMHTN). Residues 931-945 (ESDEDSNDNDNDLEN) show a composition bias toward acidic residues. 2 positions are modified to phosphoserine: S932 and S936.

Belongs to the peptidase C19 family. In terms of assembly, a homodimer structure has been reported; however it is unclear whether the protein form a homodimer in vivo. Identified in a complex with the COP9 signalosome complex (CSN). Interacts with SMAD1, SMAD2 and SMAD3; the interaction is direct. Forms a complex with SMURF2 and SMAD7. Interacts with TGFBR1. Interacts with SART3; the interaction is direct. May interact with RNF20 and RNF40. May interact with PRKN. Interacts with INCA1. Post-translationally, phosphorylated. Phosphorylation protects against ubiquitination and subsequent degradation by the proteasome. In terms of processing, ubiquitinated, leading to degradation by the proteasome. Highly expressed in testis and spleen, and at lower level in other tissues.

It localises to the cytoplasm. Its subcellular location is the nucleus. It is found in the mitochondrion. It catalyses the reaction Thiol-dependent hydrolysis of ester, thioester, amide, peptide and isopeptide bonds formed by the C-terminal Gly of ubiquitin (a 76-residue protein attached to proteins as an intracellular targeting signal).. In terms of biological role, hydrolase that removes conjugated ubiquitin from target proteins and regulates various pathways such as the TGF-beta receptor signaling, NF-kappa-B and RNF41/NRDP1-PRKN pathways. Acts as a key regulator of TGF-beta receptor signaling pathway, but the precise mechanism is still unclear: according to a report, acts by promoting deubiquitination of monoubiquitinated R-SMADs (SMAD1, SMAD2 and/or SMAD3), thereby alleviating inhibition of R-SMADs and promoting activation of TGF-beta target genes. According to another reports, regulates the TGF-beta receptor signaling pathway by mediating deubiquitination and stabilization of TGFBR1, leading to an enhanced TGF-beta signal. Able to mediate deubiquitination of monoubiquitinated substrates, 'Lys-27'-, 'Lys-48'- and 'Lys-63'-linked polyubiquitin chains. May also regulate gene expression and/or DNA repair through the deubiquitination of histone H2B. Acts as an inhibitor of mitophagy by counteracting the action of parkin (PRKN): hydrolyzes cleavage of 'Lys-48'- and 'Lys-63'-linked polyubiquitin chains attached by parkin on target proteins such as MFN2, thereby reducing parkin's ability to drive mitophagy. Acts as an associated component of COP9 signalosome complex (CSN) and regulates different pathways via this association: regulates NF-kappa-B by mediating deubiquitination of NFKBIA and deubiquitinates substrates bound to VCP. Involved in endosome organization by mediating deubiquitination of SQSTM1: ubiquitinated SQSTM1 forms a molecular bridge that restrains cognate vesicles in the perinuclear region and its deubiquitination releases target vesicles for fast transport into the cell periphery. Acts as a negative regulator of antifungal immunity by mediating 'Lys-27'-linked deubiquitination of CARD9, thereby inactivating CARD9. The protein is Ubiquitin carboxyl-terminal hydrolase 15 (Usp15) of Rattus norvegicus (Rat).